The following is a 543-amino-acid chain: Cytochrome P450 1B1 (543 aa).

Cys-470 contacts heme.

It belongs to the cytochrome P450 family. The cofactor is heme.

The protein resides in the endoplasmic reticulum membrane. The protein localises to the microsome membrane. It localises to the mitochondrion. It catalyses the reaction an organic molecule + reduced [NADPH--hemoprotein reductase] + O2 = an alcohol + oxidized [NADPH--hemoprotein reductase] + H2O + H(+). The enzyme catalyses 17beta-estradiol + reduced [NADPH--hemoprotein reductase] + O2 = 2-hydroxy-17beta-estradiol + oxidized [NADPH--hemoprotein reductase] + H2O + H(+). It carries out the reaction 17beta-estradiol + reduced [NADPH--hemoprotein reductase] + O2 = 4-hydroxy-17beta-estradiol + oxidized [NADPH--hemoprotein reductase] + H2O + H(+). The catalysed reaction is estrone + reduced [NADPH--hemoprotein reductase] + O2 = 2-hydroxyestrone + oxidized [NADPH--hemoprotein reductase] + H2O + H(+). It catalyses the reaction estrone + reduced [NADPH--hemoprotein reductase] + O2 = 4-hydroxyestrone + oxidized [NADPH--hemoprotein reductase] + H2O + H(+). The enzyme catalyses testosterone + reduced [NADPH--hemoprotein reductase] + O2 = 6beta,17beta-dihydroxyandrost-4-en-3-one + oxidized [NADPH--hemoprotein reductase] + H2O + H(+). It carries out the reaction progesterone + reduced [NADPH--hemoprotein reductase] + O2 = 6beta-hydroxyprogesterone + oxidized [NADPH--hemoprotein reductase] + H2O + H(+). The catalysed reaction is progesterone + reduced [NADPH--hemoprotein reductase] + O2 = 16alpha-hydroxyprogesterone + oxidized [NADPH--hemoprotein reductase] + H2O + H(+). It catalyses the reaction all-trans-retinol + reduced [NADPH--hemoprotein reductase] + O2 = all-trans-retinal + oxidized [NADPH--hemoprotein reductase] + 2 H2O + H(+). The enzyme catalyses all-trans-retinal + reduced [NADPH--hemoprotein reductase] + O2 = all-trans-retinoate + oxidized [NADPH--hemoprotein reductase] + H2O + 2 H(+). It carries out the reaction (5Z,8Z,11Z,14Z)-eicosatetraenoate + reduced [NADPH--hemoprotein reductase] + O2 = (8R,9S)-epoxy-(5Z,11Z,14Z)-eicosatrienoate + oxidized [NADPH--hemoprotein reductase] + H2O + H(+). The catalysed reaction is (5Z,8Z,11Z,14Z)-eicosatetraenoate + reduced [NADPH--hemoprotein reductase] + O2 = (11R,12S)-epoxy-(5Z,8Z,14Z)-eicosatrienoate + oxidized [NADPH--hemoprotein reductase] + H2O + H(+). It catalyses the reaction (5Z,8Z,11Z,14Z)-eicosatetraenoate + reduced [NADPH--hemoprotein reductase] + O2 = (11S,12R)-epoxy-(5Z,8Z,14Z)-eicosatrienoate + oxidized [NADPH--hemoprotein reductase] + H2O + H(+). The enzyme catalyses (5Z,8Z,11Z,14Z)-eicosatetraenoate + reduced [NADPH--hemoprotein reductase] + O2 = (14S,15R)-epoxy-(5Z,8Z,11Z)-eicosatrienoate + oxidized [NADPH--hemoprotein reductase] + H2O + H(+). It carries out the reaction (5Z,8Z,11Z,14Z)-eicosatetraenoate + reduced [NADPH--hemoprotein reductase] + O2 = (14R,15S)-epoxy-(5Z,8Z,11Z)-eicosatrienoate + oxidized [NADPH--hemoprotein reductase] + H2O + H(+). The catalysed reaction is (5S)-hydroperoxy-(6E,8Z,11Z,14Z)-eicosatetraenoate = 5-oxo-(6E,8Z,11Z,14Z)-eicosatetraenoate + H2O. It catalyses the reaction (12S)-hydroperoxy-(5Z,8Z,10E,14Z)-eicosatetraenoate = 12-oxo-(5Z,8Z,10E,14Z)-eicosatetraenoate + H2O. The enzyme catalyses (15S)-hydroperoxy-(5Z,8Z,11Z,13E)-eicosatetraenoate = 15-oxo-(5Z,8Z,11Z,13E)-eicosatetraenoate + H2O. It carries out the reaction (13S)-hydroperoxy-(9Z,11E)-octadecadienoate = 13-oxo-(9Z,11E)-octadecadienoate + H2O. It participates in steroid hormone biosynthesis. Its pathway is cofactor metabolism; retinol metabolism. It functions in the pathway lipid metabolism; arachidonate metabolism. Enzyme activity is increased by cytochrome b5. Enzyme activity is increased by liposomes containing anionic phospholipids, phosphatidic acid and cardiolipin. Inhibited by naringenin with an IC(50) of 5 uM. Functionally, a cytochrome P450 monooxygenase involved in the metabolism of various endogenous substrates, including fatty acids, steroid hormones and vitamins. Mechanistically, uses molecular oxygen inserting one oxygen atom into a substrate, and reducing the second into a water molecule, with two electrons provided by NADPH via cytochrome P450 reductase (NADPH--hemoprotein reductase). Exhibits catalytic activity for the formation of hydroxyestrogens from 17beta-estradiol (E2), namely 2- and 4-hydroxy E2. Metabolizes testosterone and progesterone to B or D ring hydroxylated metabolites. May act as a major enzyme for all-trans retinoic acid biosynthesis in extrahepatic tissues. Catalyzes two successive oxidative transformation of all-trans retinol to all-trans retinal and then to the active form all-trans retinoic acid. Catalyzes the epoxidation of double bonds of certain PUFA. Converts arachidonic acid toward epoxyeicosatrienoic acid (EpETrE) regioisomers, 8,9-, 11,12-, and 14,15- EpETrE, that function as lipid mediators in the vascular system. Additionally, displays dehydratase activity toward oxygenated eicosanoids including hydroperoxyeicosatetraenoates (HpETEs). This activity is independent of cytochrome P450 reductase, NADPH, and O2. Also involved in the oxidative metabolism of xenobiotics, particularly converting polycyclic aromatic hydrocarbons and heterocyclic aryl amines procarcinogens to DNA-damaging products. Plays an important role in retinal vascular development. Under ambient/hyperoxic O2 conditions, promotes angiogenesis and capillary morphogenesis of retinal endothelial cells and pericytes, likely by metabolizing the oxygenated products symptomatic of oxidative stress. Also, contributes to oxidative homeostasis and ultrastructural organization and function of trabecular meshwork tissue through modulation of POSTN expression. This chain is Cytochrome P450 1B1, found in Rattus norvegicus (Rat).